Consider the following 513-residue polypeptide: ATP synthase subunit alpha (513 aa).

169–176 (GDRQTGKT) is an ATP binding site.

Belongs to the ATPase alpha/beta chains family. As to quaternary structure, F-type ATPases have 2 components, CF(1) - the catalytic core - and CF(0) - the membrane proton channel. CF(1) has five subunits: alpha(3), beta(3), gamma(1), delta(1), epsilon(1). CF(0) has three main subunits: a(1), b(2) and c(9-12). The alpha and beta chains form an alternating ring which encloses part of the gamma chain. CF(1) is attached to CF(0) by a central stalk formed by the gamma and epsilon chains, while a peripheral stalk is formed by the delta and b chains.

The protein resides in the cell inner membrane. The catalysed reaction is ATP + H2O + 4 H(+)(in) = ADP + phosphate + 5 H(+)(out). Functionally, produces ATP from ADP in the presence of a proton gradient across the membrane. The alpha chain is a regulatory subunit. The chain is ATP synthase subunit alpha from Haemophilus ducreyi (strain 35000HP / ATCC 700724).